Reading from the N-terminus, the 174-residue chain is Period clock protein (174 aa).

The interval 46 to 134 is disordered; sequence SSEGTGAGTG…GTGTGTGTGT (89 aa). A run of 45 repeats spans residues 49–50, 51–52, 53–54, 55–56, 57–58, 59–60, 61–62, 63–64, 65–66, 67–68, 69–70, 71–72, 73–74, 75–76, 77–78, 79–80, 81–82, 83–84, 85–86, 87–88, 89–90, 91–92, 93–94, 95–96, 97–98, 99–100, 101–102, 103–104, 105–106, 107–108, 109–110, 111–112, 113–114, 115–116, 117–118, 119–120, 121–122, 123–124, 125–126, 127–128, 129–130, 131–132, 133–134, 135–136, and 137–138. The interval 49 to 138 is 45 X 2 AA tandem repeats of G-[TA]; it reads GTGAGTGTGT…GTGTGTGTGT (90 aa). The segment covering 50-134 has biased composition (gly residues); sequence TGAGTGTGTG…GTGTGTGTGT (85 aa).

Its subcellular location is the plastid. The protein resides in the chloroplast. The chain is Period clock protein from Acetabularia acetabulum (Mermaid's wine glass).